The sequence spans 236 residues: Protein Thf1 (236 aa).

Positions 180–220 (PVEKMQKDLEQYRSNLEKMTQARKTLEDIVAAERKRRQQNA) form a coiled coil. Residues 206 to 236 (EDIVAAERKRRQQNAAPDRSPESASATEAPN) form a disordered region. Residues 227–236 (ESASATEAPN) show a composition bias toward polar residues.

This sequence belongs to the THF1 family.

In terms of biological role, may be involved in photosynthetic membrane biogenesis. In Cyanothece sp. (strain PCC 7425 / ATCC 29141), this protein is Protein Thf1.